We begin with the raw amino-acid sequence, 380 residues long: Probable protein phosphatase 2C 2 (380 aa).

A PPM-type phosphatase domain is found at 122–376 (GYSVYCKRGK…DDISVMLIQL (255 aa)). 4 residues coordinate Mn(2+): D158, G159, D321, and D367.

It belongs to the PP2C family. The cofactor is Mg(2+). Mn(2+) is required as a cofactor.

It catalyses the reaction O-phospho-L-seryl-[protein] + H2O = L-seryl-[protein] + phosphate. The enzyme catalyses O-phospho-L-threonyl-[protein] + H2O = L-threonyl-[protein] + phosphate. The protein is Probable protein phosphatase 2C 2 of Arabidopsis thaliana (Mouse-ear cress).